A 247-amino-acid polypeptide reads, in one-letter code: Ribonuclease 3 (247 aa).

The 129-residue stretch at 21–149 folds into the RNase III domain; sequence FKKLSKKIGI…LVGAIYLDRG (129 aa). E62 contacts Mg(2+). Residue D66 is part of the active site. Mg(2+)-binding residues include N135 and E138. The active site involves E138. Residues 176–245 enclose the DRBM domain; it reads DYKTQLQEYS…AKELYIRIRR (70 aa).

It belongs to the ribonuclease III family. In terms of assembly, homodimer. It depends on Mg(2+) as a cofactor.

It is found in the cytoplasm. The enzyme catalyses Endonucleolytic cleavage to 5'-phosphomonoester.. Digests double-stranded RNA. Involved in the processing of primary rRNA transcript to yield the immediate precursors to the large and small rRNAs (23S and 16S). Processes some mRNAs, and tRNAs when they are encoded in the rRNA operon. Processes pre-crRNA and tracrRNA of type II CRISPR loci if present in the organism. The sequence is that of Ribonuclease 3 from Leptospira borgpetersenii serovar Hardjo-bovis (strain L550).